We begin with the raw amino-acid sequence, 485 residues long: E3 ubiquitin-protein ligase RNF14 (485 aa).

Positions 11-137 constitute an RWD domain; that stretch reads DELLALASIY…QFLKEETLTY (127 aa). Residues 37 to 45 carry the D-box motif; that stretch reads RIYLDLPQN. A TRIAD supradomain region spans residues 217–458; it reads KLFLCSICFC…DSESPCFNRL (242 aa). 15 residues coordinate Zn(2+): cysteine 221, cysteine 224, cysteine 239, histidine 241, cysteine 244, cysteine 247, cysteine 266, cysteine 271, cysteine 310, cysteine 315, cysteine 330, cysteine 333, cysteine 338, cysteine 341, and histidine 346. An RING-type 1 zinc finger spans residues 221-271; sequence CSICFCEKLGSDCMYFLECKHVYCKACLKDYFEIQIKDGQVKCLNCPEPQC. The IBR-type zinc finger occupies 290–351; the sequence is ARYDRLLLQS…RLTYHGLSPC (62 aa). Serine 349 is modified (phosphoserine). Zn(2+) contacts are provided by cysteine 351, cysteine 405, and cysteine 408. The RING-type 2; atypical zinc finger occupies 405-434; sequence CPCCGTPIQKLDGCNKMTCTGCMQYFCWIC. The active site involves cysteine 418. Residues cysteine 423, cysteine 426, cysteine 431, cysteine 434, histidine 446, and cysteine 454 each coordinate Zn(2+).

Belongs to the RBR family. RNF14 subfamily. As to quaternary structure, interacts with GCN1; interaction takes place in response to ribosome collisions and is required for ubiquitination of EEF1A1/eEF1A. Interacts with the ubiquitin-conjugating enzymes UBE2E1 and UBE2E2. Interacts with AR/androgen receptor. Interacts with TCF7/TCF1, TCF7L1/TCF3 and TCF7L2/TCF4; promoting Wnt signaling. In terms of processing, RING-type zinc finger-dependent and UBE2E2-dependent autoubiquitination.

The protein resides in the cytoplasm. It localises to the nucleus. It catalyses the reaction [E2 ubiquitin-conjugating enzyme]-S-ubiquitinyl-L-cysteine + [acceptor protein]-L-lysine = [E2 ubiquitin-conjugating enzyme]-L-cysteine + [acceptor protein]-N(6)-ubiquitinyl-L-lysine.. The protein operates within protein modification; protein ubiquitination. Functionally, E3 ubiquitin-protein ligase that plays a key role in the RNF14-RNF25 translation quality control pathway, a pathway that takes place when a ribosome has stalled during translation, and which promotes ubiquitination and degradation of translation factors on stalled ribosomes. Recruited to stalled ribosomes by the ribosome collision sensor GCN1 and mediates 'Lys-6'-linked ubiquitination of target proteins, leading to their degradation. Mediates ubiquitination of EEF1A1/eEF1A and ETF1/eRF1 translation factors on stalled ribosomes, leading to their degradation. Also catalyzes ubiquitination of ribosomal proteins RPL0, RPL1, RPL12, RPS13 and RPS17. Specifically required to resolve RNA-protein cross-links caused by reactive aldehydes, which trigger translation stress by stalling ribosomes: acts by catalying 'Lys-6'-linked ubiquitination of RNA-protein cross-links, leading to their removal by the ATP-dependent unfoldase VCP and subsequent degradation by the proteasome. Independently of its function in the response to stalled ribosomes, acts as a regulator of transcription in Wnt signaling via its interaction with TCF transcription factors (TCF7/TCF1, TCF7L1/TCF3 and TCF7L2/TCF4). May also play a role as a coactivator for androgen- and, to a lesser extent, progesterone-dependent transcription. The polypeptide is E3 ubiquitin-protein ligase RNF14 (Mus musculus (Mouse)).